The chain runs to 152 residues: Nucleoside diphosphate kinase (152 aa).

Lys-11, Phe-59, Arg-87, Thr-93, Arg-104, and Asn-114 together coordinate ATP. His-117 acts as the Pros-phosphohistidine intermediate in catalysis.

This sequence belongs to the NDK family. In terms of assembly, homotetramer. Mg(2+) is required as a cofactor.

The protein resides in the cytoplasm. The catalysed reaction is a 2'-deoxyribonucleoside 5'-diphosphate + ATP = a 2'-deoxyribonucleoside 5'-triphosphate + ADP. It catalyses the reaction a ribonucleoside 5'-diphosphate + ATP = a ribonucleoside 5'-triphosphate + ADP. In terms of biological role, major role in the synthesis of nucleoside triphosphates other than ATP. The ATP gamma phosphate is transferred to the NDP beta phosphate via a ping-pong mechanism, using a phosphorylated active-site intermediate. This Prochlorococcus marinus (strain MIT 9301) protein is Nucleoside diphosphate kinase.